Here is a 395-residue protein sequence, read N- to C-terminus: MASIEAALAEIKRGVEELIPEEELIAKLKEGRPLRIKLGADPTAPDIHLGHTVILNKLRAFQDLGHDVTFLIGDFTGMVGDPTGKNSTRPPLTREDVLRNAETYKQQVFKILDPAKTKIQFNSEWLSELGAEGMIRLAANQTVARMLERDDFKKRYAGGQPIAIHEFMYPLLQGYDSVAMETDVELGGTDQKFNLLMGRELQKANGQKPQVVLMMPLLVGLDGEKKMSKSANNYIGVSEAPSEMFGKIMSISDDLMWSYYELLSFRPLEELAQFKADVAAGKNPRDIKVLLAKEIIARFHSEADADAAEQEFVNRFAKNQIPDEMPEFTFAAGTPMANLLKEAELCSSTSEAMRMVKQGAAKMDGEKVEDAKAEPAVGTYVFQVGKRKFARITIA.

Positions 42 to 51 (PTAPDIHLGH) match the 'HIGH' region motif. The 'KMSKS' region motif lies at 226-230 (KMSKS). ATP is bound at residue lysine 229. Residues 334–395 (TPMANLLKEA…KRKFARITIA (62 aa)) enclose the S4 RNA-binding domain.

It belongs to the class-I aminoacyl-tRNA synthetase family. TyrS type 2 subfamily. In terms of assembly, homodimer.

The protein resides in the cytoplasm. The catalysed reaction is tRNA(Tyr) + L-tyrosine + ATP = L-tyrosyl-tRNA(Tyr) + AMP + diphosphate + H(+). In terms of biological role, catalyzes the attachment of tyrosine to tRNA(Tyr) in a two-step reaction: tyrosine is first activated by ATP to form Tyr-AMP and then transferred to the acceptor end of tRNA(Tyr). The sequence is that of Tyrosine--tRNA ligase 2 from Vibrio vulnificus (strain CMCP6).